The primary structure comprises 566 residues: Hemocyanin B chain (566 aa).

An intrachain disulfide couples C82 to C87. Cu cation-binding residues include H183, H187, H213, H309, H313, and H347.

It belongs to the tyrosinase family. Hemocyanin subfamily. Hemolymph.

It is found in the secreted. It localises to the extracellular space. Its function is as follows. Hemocyanins are copper-containing oxygen carriers occurring freely dissolved in the hemolymph of many mollusks and arthropods. The sequence is that of Hemocyanin B chain from Astacus leptodactylus (Turkish narrow-clawed crayfish).